Consider the following 502-residue polypeptide: Probable cytosol aminopeptidase (502 aa).

K269 and D274 together coordinate Mn(2+). K281 is an active-site residue. Mn(2+) is bound by residues D292, D351, and E353. R355 is a catalytic residue.

The protein belongs to the peptidase M17 family. Mn(2+) serves as cofactor.

The protein resides in the cytoplasm. The catalysed reaction is Release of an N-terminal amino acid, Xaa-|-Yaa-, in which Xaa is preferably Leu, but may be other amino acids including Pro although not Arg or Lys, and Yaa may be Pro. Amino acid amides and methyl esters are also readily hydrolyzed, but rates on arylamides are exceedingly low.. It catalyses the reaction Release of an N-terminal amino acid, preferentially leucine, but not glutamic or aspartic acids.. Its function is as follows. Presumably involved in the processing and regular turnover of intracellular proteins. Catalyzes the removal of unsubstituted N-terminal amino acids from various peptides. The protein is Probable cytosol aminopeptidase of Shewanella piezotolerans (strain WP3 / JCM 13877).